Consider the following 140-residue polypeptide: Large-conductance mechanosensitive channel (140 aa).

A run of 2 helical transmembrane segments spans residues 16 to 36 (VVDL…VDSI) and 86 to 106 (GSFL…FLMV).

Belongs to the MscL family. In terms of assembly, homopentamer.

The protein localises to the cell inner membrane. Functionally, channel that opens in response to stretch forces in the membrane lipid bilayer. May participate in the regulation of osmotic pressure changes within the cell. This Anaeromyxobacter sp. (strain K) protein is Large-conductance mechanosensitive channel.